The sequence spans 606 residues: NADH-ubiquinone oxidoreductase chain 5 (606 aa).

16 helical membrane passes run 3–23 (LFTS…LMSL), 35–55 (YVKT…LIFI), 87–107 (MIFT…SMWY), 117–137 (FFKY…ANNL), 140–160 (LFIG…WWYG), 171–191 (AILY…WFLF), 211–233 (LPLL…HPWL), 241–261 (TPVS…FLLI), 273–293 (MQTL…ICAL), 301–320 (IIAF…IGIN), 325–347 (AFLH…GSII), 366–386 (LPFT…TPFL), 402–422 (SYTN…TAVY), 457–477 (LLIG…PMTI), 488–508 (LTAL…SLMT), and 582–602 (GLIK…MLLF).

The protein belongs to the complex I subunit 5 family. Core subunit of respiratory chain NADH dehydrogenase (Complex I) which is composed of 45 different subunits.

It localises to the mitochondrion inner membrane. It carries out the reaction a ubiquinone + NADH + 5 H(+)(in) = a ubiquinol + NAD(+) + 4 H(+)(out). In terms of biological role, core subunit of the mitochondrial membrane respiratory chain NADH dehydrogenase (Complex I) which catalyzes electron transfer from NADH through the respiratory chain, using ubiquinone as an electron acceptor. Essential for the catalytic activity and assembly of complex I. The polypeptide is NADH-ubiquinone oxidoreductase chain 5 (MT-ND5) (Pseudosoriculus fumidus (Taiwanese brown-toothed shrew)).